A 355-amino-acid polypeptide reads, in one-letter code: uncharacterized protein (355 aa).

Residue 58-65 participates in ATP binding; that stretch reads GYIIFGIK.

This is an uncharacterized protein from Ureaplasma parvum serovar 3 (strain ATCC 700970).